Consider the following 885-residue polypeptide: MPIWGAISSNDLLNTYYTIEESQQIVEELLDFQMHNDQLEYFDSIEDAKKRFITDLYEILEKKHQKTNTFQIVSPPSAGKNFFIETVLAFYWNTGVIQNFNRYNNFPLMEAVNRRVNYWDEPNFEPDATETLKKLFAGTSLKATVKFQKEANVQKTPVIITANYDKFTKEVWDDRIIKYYWYPCPKLKEYNKRLHPFAWVYLIDKYVTDLLILIKMYNHRVMGNKICNLIKMYKYRVMVINIFSAFICLILIFLTNNYLGPGLYTCKSIDETTLSEAVVIWPSDKVTNHKEVFQADKQARDEFFTSFVHIGNVHSLIGGIGLGTKNLVEEHVLGKPLYGMGKRKSTEKDWAKIKRINRARAARRENQENQPDIREFGHVAGQNINADQEVNLADFPDFLQDFDAEAGPSGTQPVETAQQSPPTMSEDIQPMETVGATDTGGGAQVDPRTGGQAAGGSEMGAGGSANDGREDIFSGAPQPNQHHTLVYGKSYHFTITKWFTEFRHLATTNSGYYAQQRFKHIHGIPWERLLMYVSEGELLRMFRDYTSLKVEEVVCEVYSLGVRLPFVTSATTSSVANANAQYPIDVFHFDEAYETNYGINNVADIINKALGTEWKNATRPTAPVTTAWSEQFPNISASSTSRDINNPVIVDYSLPYFENNVPKDVGIYDYVDIKNGTTAYGKCWEKRFKPTNGLLYAESTLKGNVVTPLAAPTNIMTPIPGLENGYFMSNDQIRERRDLTTSVPPDALTATKLNQSASNNLNAFVDYMGYNYFGEQKAPQSMPKFMIGFVNIRNEDNSLLNAKWDILIKTRIRLTGLQSTREWVARTDRIPPQYFTSQYTQFRYPNINDTPLLRSLGTFKLPTKRPGMDSRIALGELQKQRKMNL.

The interval 404 to 477 is disordered; that stretch reads AEAGPSGTQP…GREDIFSGAP (74 aa). Positions 409 to 423 are enriched in polar residues; the sequence is SGTQPVETAQQSPPT. Gly residues predominate over residues 452-465; it reads QAAGGSEMGAGGSA.

This sequence belongs to the parvoviruses initiator protein NS1 family. Homooligomer. It depends on Mg(2+) as a cofactor.

It localises to the host nucleus. It catalyses the reaction ATP + H2O = ADP + phosphate + H(+). Functionally, multifunctional protein which displays endonuclease and helicase activities required for initiating and directing viral DNA replication. Also plays a role in viral packaging and transactivation of several promoters. Binds site-specifically to 2-3 approximate tandem copies within the origins of replication (Ori), unwinds this hairpin region and nicks one DNA strand thereby initiating the rolling circle replication (RCR). In Bombyx mori densovirus (BmDNV), this protein is Initiator protein NS1.